The primary structure comprises 1340 residues: DNA-directed RNA polymerase subunit beta (1340 aa).

It belongs to the RNA polymerase beta chain family. The RNAP catalytic core consists of 2 alpha, 1 beta, 1 beta' and 1 omega subunit. When a sigma factor is associated with the core the holoenzyme is formed, which can initiate transcription.

It catalyses the reaction RNA(n) + a ribonucleoside 5'-triphosphate = RNA(n+1) + diphosphate. DNA-dependent RNA polymerase catalyzes the transcription of DNA into RNA using the four ribonucleoside triphosphates as substrates. In Baumannia cicadellinicola subsp. Homalodisca coagulata, this protein is DNA-directed RNA polymerase subunit beta.